The sequence spans 233 residues: Phycoerythrobilin synthase (233 aa).

Belongs to the HY2 family.

It carries out the reaction (3Z)-phycoerythrobilin + 2 oxidized 2[4Fe-4S]-[ferredoxin] = biliverdin IXalpha + 2 reduced 2[4Fe-4S]-[ferredoxin] + 4 H(+). Its function is as follows. Plays a role in phycoerythrobilin biosynthesis, the red pigment chromophore photosynthetically active biliproteins of the host cyanobacteria. Uses a four-electron reduction to carry out the reactions catalyzed by two enzymes (EC 1.3.7.2 and EC 1.3.7.3) in host. This chain is Phycoerythrobilin synthase (pebS), found in Prochlorococcus.